We begin with the raw amino-acid sequence, 458 residues long: Ammonium transporter Rh type B (458 aa).

At 1 to 13 (MAGSPSRAAGRRL) the chain is on the cytoplasmic side. Residues 14 to 34 (QLPLLCLFLQGATAVLFAVFV) traverse the membrane as a helical segment. Residues 35 to 61 (RYNHKTDAALWHRGNYSNADNEFYFRY) are Extracellular-facing. Asparagine 49 carries N-linked (GlcNAc...) asparagine glycosylation. A helical membrane pass occupies residues 62 to 82 (PSFQDVHAMVFVGFGFLMVFL). Residues 83 to 86 (QRYG) lie on the Cytoplasmic side of the membrane. A helical transmembrane segment spans residues 87 to 107 (FSSVGFTFLLAAFALQWSTLV). Topologically, residues 108–124 (QGFLHSFHSGHIHVGVE) are extracellular. Residues 125 to 145 (SMINADFCAGAVLISFGAVLG) form a helical membrane-spanning segment. Over 146 to 149 (KTGP) the chain is Cytoplasmic. The helical transmembrane segment at 150-170 (AQLLLMALLEVVLFGINEFVL) threads the bilayer. Topologically, residues 171 to 178 (LHLLGVRD) are extracellular. A helical transmembrane segment spans residues 179–201 (AGGSMTIHTFGAYFGLVLSRVLY). The Cytoplasmic portion of the chain corresponds to 202–219 (RPQLEKSKHRQGSVYHSD). A helical transmembrane segment spans residues 220–240 (LFAMIGTIFLWIFWPSFNSAL). Topologically, residues 241 to 251 (TALGAGQHRTA) are extracellular. Residues 252–272 (LNTYYSLAASTLGTFALSALV) form a helical membrane-spanning segment. The Cytoplasmic segment spans residues 273–282 (GEDGRLDMVH). A helical transmembrane segment spans residues 283–303 (IQNAALAGGVVVGTSSEMMLT). A topological domain (extracellular) is located at residue proline 304. The chain crosses the membrane as a helical span at residues 305–325 (FGALAAGFLAGTVSTLGYKFF). The Cytoplasmic portion of the chain corresponds to 326–346 (TPILESKFKVQDTCGVHNLHG). The chain crosses the membrane as a helical span at residues 347–367 (MPGVLGALLGVLVAGLATHEA). The Extracellular segment spans residues 368–393 (YGDGLESVFPLIAEGQRSATSQAMLQ). The chain crosses the membrane as a helical span at residues 394 to 414 (LFGLFVTLMFASVGGGLGGLL). At 415 to 458 (LKLPFLDSPPDSQCYEDQVHWQVPGEHEDEAQRPLRVEEADTQA) the chain is on the cytoplasmic side. Residues 416 to 424 (KLPFLDSPP) are interaction with ANK3. The Basolateral sorting signal motif lies at 429-432 (YEDQ). The segment at 439 to 458 (GEHEDEAQRPLRVEEADTQA) is disordered. Residues 444-458 (EAQRPLRVEEADTQA) are compositionally biased toward basic and acidic residues.

Belongs to the ammonium transporter (TC 2.A.49) family. Rh subfamily. As to quaternary structure, interacts (via C-terminus) with ANK2 and ANK3; required for targeting to the basolateral membrane. Post-translationally, N-glycosylated.

It is found in the cell membrane. Its subcellular location is the basolateral cell membrane. The catalysed reaction is NH4(+)(in) = NH4(+)(out). The enzyme catalyses methylamine(out) = methylamine(in). It catalyses the reaction CO2(out) = CO2(in). In terms of biological role, ammonium transporter involved in the maintenance of acid-base homeostasis. Transports ammonium and its related derivative methylammonium across the basolateral plasma membrane of epithelial cells likely contributing to renal transepithelial ammonia transport and ammonia metabolism. May transport either NH4(+) or NH3 ammonia species predominantly mediating an electrogenic NH4(+) transport. May act as a CO2 channel providing for renal acid secretion. The chain is Ammonium transporter Rh type B (RHBG) from Papio hamadryas (Hamadryas baboon).